The primary structure comprises 192 residues: Adapter protein MecA (192 aa).

This sequence belongs to the MecA family. As to quaternary structure, homodimer.

Its function is as follows. Enables the recognition and targeting of unfolded and aggregated proteins to the ClpC protease or to other proteins involved in proteolysis. Acts negatively in the development of competence by binding ComK and recruiting it to the ClpCP protease. When overexpressed, inhibits sporulation. Also involved in Spx degradation by ClpC. The chain is Adapter protein MecA from Oceanobacillus iheyensis (strain DSM 14371 / CIP 107618 / JCM 11309 / KCTC 3954 / HTE831).